We begin with the raw amino-acid sequence, 199 residues long: Imidazole glycerol phosphate synthase subunit HisH (199 aa).

In terms of domain architecture, Glutamine amidotransferase type-1 spans 3 to 199 (NITIIDTGCA…LKNFVEKVPF (197 aa)). Cys-78 serves as the catalytic Nucleophile. Active-site residues include His-178 and Glu-180.

Heterodimer of HisH and HisF.

It localises to the cytoplasm. It carries out the reaction 5-[(5-phospho-1-deoxy-D-ribulos-1-ylimino)methylamino]-1-(5-phospho-beta-D-ribosyl)imidazole-4-carboxamide + L-glutamine = D-erythro-1-(imidazol-4-yl)glycerol 3-phosphate + 5-amino-1-(5-phospho-beta-D-ribosyl)imidazole-4-carboxamide + L-glutamate + H(+). The catalysed reaction is L-glutamine + H2O = L-glutamate + NH4(+). It participates in amino-acid biosynthesis; L-histidine biosynthesis; L-histidine from 5-phospho-alpha-D-ribose 1-diphosphate: step 5/9. In terms of biological role, IGPS catalyzes the conversion of PRFAR and glutamine to IGP, AICAR and glutamate. The HisH subunit catalyzes the hydrolysis of glutamine to glutamate and ammonia as part of the synthesis of IGP and AICAR. The resulting ammonia molecule is channeled to the active site of HisF. This Haemophilus influenzae (strain ATCC 51907 / DSM 11121 / KW20 / Rd) protein is Imidazole glycerol phosphate synthase subunit HisH (hisH).